The sequence spans 747 residues: Polyribonucleotide nucleotidyltransferase (747 aa).

2 residues coordinate Mg(2+): aspartate 487 and aspartate 493. The KH domain maps to 554 to 613; sequence PSTTTIKIDKDKIRDIIGPGGKIIKEICETSGAKIDISDDGTVSVYAADRDKLKIASDKI. Positions 623 to 691 constitute an S1 motif domain; that stretch reads GEIFNGTVTK…NKGKAKLTIK (69 aa). Residues 694–716 are disordered; the sequence is DKDKSLNNPKPQNSINNAKENSE. Residues 699-712 are compositionally biased toward polar residues; it reads LNNPKPQNSINNAK.

The protein belongs to the polyribonucleotide nucleotidyltransferase family. Requires Mg(2+) as cofactor.

Its subcellular location is the cytoplasm. It catalyses the reaction RNA(n+1) + phosphate = RNA(n) + a ribonucleoside 5'-diphosphate. Involved in mRNA degradation. Catalyzes the phosphorolysis of single-stranded polyribonucleotides processively in the 3'- to 5'-direction. In Rickettsia canadensis (strain McKiel), this protein is Polyribonucleotide nucleotidyltransferase.